Reading from the N-terminus, the 515-residue chain is Maturase K (515 aa).

The protein belongs to the intron maturase 2 family. MatK subfamily.

Its subcellular location is the plastid. It is found in the chloroplast. In terms of biological role, usually encoded in the trnK tRNA gene intron. Probably assists in splicing its own and other chloroplast group II introns. This is Maturase K from Sorghum bicolor (Sorghum).